Consider the following 237-residue polypeptide: Uridylate kinase (237 aa).

ATP is bound at residue 12–15 (KLSG). An involved in allosteric activation by GTP region spans residues 20 to 25 (GENGFG). Gly-54 lines the UMP pocket. 2 residues coordinate ATP: Gly-55 and Arg-59. Residues Asp-72 and 133 to 140 (TGNPYFST) each bind UMP. Positions 166 and 169 each coordinate ATP.

This sequence belongs to the UMP kinase family. Homohexamer.

It localises to the cytoplasm. The enzyme catalyses UMP + ATP = UDP + ADP. Its pathway is pyrimidine metabolism; CTP biosynthesis via de novo pathway; UDP from UMP (UMPK route): step 1/1. Allosterically activated by GTP. Inhibited by UTP. Functionally, catalyzes the reversible phosphorylation of UMP to UDP. This is Uridylate kinase from Clostridium perfringens (strain SM101 / Type A).